The sequence spans 540 residues: MTLNSLPAWTALQSHFEQIRHARLRDWFAPENDRAPTRAERFTIPGGGLAADLSKNRINDDTLRLLVQLAREAGVEARRDAMFAGEIVNPTEGRAALHTALRATDPHAPFHAQISAERAKMATFARAVRSGAWTGYTGKRIRHVINIGIGGSDLGPKMVTHALHHVASPDISTHFVSNVDGADLARVLEQVDPEETLAIIVSKTFTTLETMTNARSLRDWFVARGCPEAALAKHFVGVSANPAEVVKFGIDADNVFEMWDWVGGRYSLWSAVGLSIMIAIGPEQFDELLAGANDMDRHFRQAPLERNLPVLLGLIGIWYRNFFGSQSYLVAPYSEALHYLPSYLQQLEMESNGKSARLDGTFVDYPTSAVTWGEPGTNGQHAFFQMLHQGPTIVPIDFIAVLTPEHPLASHHPKLLANCFAQSEALMLGRTLDEARKVAGPGKEALAPHLTFPGNRPTTTLLVDALTPRTLGALIALYEHKVLVQATVWDINPFDQWGVELGKILGKVVEADLSAESVDPAKHDSSTTALIERARAALKR.

Catalysis depends on glutamate 350, which acts as the Proton donor. Catalysis depends on residues histidine 381 and lysine 503.

The protein belongs to the GPI family.

The protein resides in the cytoplasm. It carries out the reaction alpha-D-glucose 6-phosphate = beta-D-fructose 6-phosphate. It functions in the pathway carbohydrate biosynthesis; gluconeogenesis. The protein operates within carbohydrate degradation; glycolysis; D-glyceraldehyde 3-phosphate and glycerone phosphate from D-glucose: step 2/4. Catalyzes the reversible isomerization of glucose-6-phosphate to fructose-6-phosphate. This is Glucose-6-phosphate isomerase from Burkholderia ambifaria (strain MC40-6).